Consider the following 644-residue polypeptide: Major core protein OPG129 (644 aa).

The propeptide occupies 1–61 (MEAVVNSDVF…IVDDDFISAG (61 aa)). Residues 60–81 (AGARNQRTKPKRTGNDQSQQPI) form a disordered region.

It belongs to the orthopoxvirus OPG129 family. Post-translationally, the 73-kDa precursor is cleaved to a mature protein of 60 kDa during virion maturation. Proteolytic cleavage of major core proteins OPG129, OPG136, and OPG098, which occurs at a late stage of core formation, is required for production of infectious mature virions (MV).

Its subcellular location is the virion. Functionally, major component of the virion core that undergoes proteolytic processing during the immature virion (IV) to mature virion (MV) transition. Essential for the formation of a structurally normal core. The protein is Major core protein OPG129 (OPG129) of Monkeypox virus.